We begin with the raw amino-acid sequence, 168 residues long: Ribosome maturation factor RimM (168 aa).

Positions 94–167 constitute a PRC barrel domain; that stretch reads DGQYYYHQII…FVTVELMEGL (74 aa).

The protein belongs to the RimM family. Binds ribosomal protein uS19.

Its subcellular location is the cytoplasm. Functionally, an accessory protein needed during the final step in the assembly of 30S ribosomal subunit, possibly for assembly of the head region. Essential for efficient processing of 16S rRNA. May be needed both before and after RbfA during the maturation of 16S rRNA. It has affinity for free ribosomal 30S subunits but not for 70S ribosomes. This chain is Ribosome maturation factor RimM, found in Limosilactobacillus reuteri (strain DSM 20016) (Lactobacillus reuteri).